The following is a 170-amino-acid chain: Ergosterol biosynthetic protein 28 (170 aa).

Helical transmembrane passes span 7–27 (FLPE…IISI), 116–136 (TLAY…LFVF), and 141–161 (FGLP…WMPL).

The protein belongs to the ERG28 family. In terms of assembly, heterotetramer of ERG25, ERG26, ERG27 and ERG28. ERG28 acts as a scaffold to tether ERG27 and other 4,4-demethylation-related enzymes, forming a demethylation enzyme complex, in the endoplasmic reticulum.

It is found in the endoplasmic reticulum membrane. The protein operates within steroid metabolism; ergosterol biosynthesis. Sterol 24-C-methyltransferase; part of the third module of ergosterol biosynthesis pathway that includes the late steps of the pathway. ERG28 has a role as a scaffold to help anchor the catalytic components of the C-4 demethylation complex ERG25, ERG26 and ERG27 to the endoplasmic reticulum. The third module or late pathway involves the ergosterol synthesis itself through consecutive reactions that mainly occur in the endoplasmic reticulum (ER) membrane. Firstly, the squalene synthase ERG9 catalyzes the condensation of 2 farnesyl pyrophosphate moieties to form squalene, which is the precursor of all steroids. Squalene synthase is crucial for balancing the incorporation of farnesyl diphosphate (FPP) into sterol and nonsterol isoprene synthesis. Secondly, squalene is converted into lanosterol by the consecutive action of the squalene epoxidase ERG1 and the lanosterol synthase ERG7. Then, the delta(24)-sterol C-methyltransferase ERG6 methylates lanosterol at C-24 to produce eburicol. Eburicol is the substrate of the sterol 14-alpha demethylase encoded by CYP51A, CYP51B and CYP51C, to yield 4,4,24-trimethyl ergosta-8,14,24(28)-trienol. CYP51B encodes the enzyme primarily responsible for sterol 14-alpha-demethylation, and plays an essential role in ascospore formation. CYP51A encodes an additional sterol 14-alpha-demethylase, induced on ergosterol depletion and responsible for the intrinsic variation in azole sensitivity. The third CYP51 isoform, CYP51C, does not encode a sterol 14-alpha-demethylase, but is required for full virulence on host wheat ears. The C-14 reductase ERG24 then reduces the C14=C15 double bond which leads to 4,4-dimethylfecosterol. A sequence of further demethylations at C-4, involving the C-4 demethylation complex containing the C-4 methylsterol oxidases ERG25, the sterol-4-alpha-carboxylate 3-dehydrogenase ERG26 and the 3-keto-steroid reductase ERG27, leads to the production of fecosterol via 4-methylfecosterol. ERG28 has a role as a scaffold to help anchor ERG25, ERG26 and ERG27 to the endoplasmic reticulum. The C-8 sterol isomerase ERG2 then catalyzes the reaction which results in unsaturation at C-7 in the B ring of sterols and thus converts fecosterol to episterol. The sterol-C5-desaturases ERG3A and ERG3BB then catalyze the introduction of a C-5 double bond in the B ring to produce 5-dehydroepisterol. The C-22 sterol desaturases ERG5A and ERG5B further convert 5-dehydroepisterol into ergosta-5,7,22,24(28)-tetraen-3beta-ol by forming the C-22(23) double bond in the sterol side chain. Finally, ergosta-5,7,22,24(28)-tetraen-3beta-ol is substrate of the C-24(28) sterol reductase ERG4 to produce ergosterol. The sequence is that of Ergosterol biosynthetic protein 28 from Gibberella zeae (strain ATCC MYA-4620 / CBS 123657 / FGSC 9075 / NRRL 31084 / PH-1) (Wheat head blight fungus).